The sequence spans 405 residues: Diaminopimelate decarboxylase (405 aa).

N6-(pyridoxal phosphate)lysine is present on Lys-46. Residues Gly-225 and 259–262 (EPGR) contribute to the pyridoxal 5'-phosphate site. Substrate-binding residues include Arg-262, Arg-298, and Tyr-302. Cys-329 serves as the catalytic Proton donor. Substrate contacts are provided by Glu-330 and Tyr-358. Tyr-358 serves as a coordination point for pyridoxal 5'-phosphate.

Belongs to the Orn/Lys/Arg decarboxylase class-II family. LysA subfamily. Homodimer. It depends on pyridoxal 5'-phosphate as a cofactor.

It catalyses the reaction meso-2,6-diaminopimelate + H(+) = L-lysine + CO2. It participates in amino-acid biosynthesis; L-lysine biosynthesis via DAP pathway; L-lysine from DL-2,6-diaminopimelate: step 1/1. Its function is as follows. Specifically catalyzes the decarboxylation of meso-diaminopimelate (meso-DAP) to L-lysine. In Helicobacter pylori (strain ATCC 700392 / 26695) (Campylobacter pylori), this protein is Diaminopimelate decarboxylase.